The primary structure comprises 523 residues: ADP-ribosylation factor GTPase-activating protein 3 (523 aa).

One can recognise an Arf-GAP domain in the interval 10–126 (LAIFKRLRSV…IKTLATQATR (117 aa)). A C4-type zinc finger spans residues 25 to 48 (CFDCGAKNPSWASISYGVFLCIDC). The interval 162–206 (GAMQASAQPESASSTPWGLETTPEKHEGGPGQGPSVEGLNTPGKA) is disordered. Polar residues predominate over residues 164-177 (MQASAQPESASSTP). Residues Ser-231 and Ser-241 each carry the phosphoserine modification. Residues 248–269 (QAQAVDKRKEQEDLARGAPKEE) form a disordered region. Ser-270, Ser-274, and Ser-331 each carry phosphoserine. Residues 308–424 (GFGSCRSGIS…YEPIGSTDEA (117 aa)) form a disordered region. Residues 314-332 (SGISHSVTSDMQTIEQESP) show a composition bias toward polar residues. The segment covering 348–361 (SYFSSSSKWSEQSS) has biased composition (low complexity). Position 377 is a phosphoserine (Ser-377). The span at 385 to 396 (YWKKDSSRDPEP) shows a compositional bias: basic and acidic residues. Residues Ser-435, Ser-458, Ser-460, Ser-462, Ser-464, and Ser-465 each carry the phosphoserine modification.

It is found in the cytoplasm. The protein localises to the golgi apparatus membrane. With respect to regulation, GAP activity stimulated by phosphatidylinositol 4,5-bisphosphate (PIP2). In terms of biological role, GTPase-activating protein (GAP) for ADP ribosylation factor 1 (ARF1). Hydrolysis of ARF1-bound GTP may lead to dissociation of coatomer from Golgi-derived membranes to allow fusion with target membranes. In Mus musculus (Mouse), this protein is ADP-ribosylation factor GTPase-activating protein 3 (Arfgap3).